We begin with the raw amino-acid sequence, 218 residues long: tRNA (guanine-N(7)-)-methyltransferase (218 aa).

S-adenosyl-L-methionine is bound by residues E43, D68, E101, and N124. Substrate is bound by residues K128 and D160.

This sequence belongs to the class I-like SAM-binding methyltransferase superfamily. TrmB family.

The enzyme catalyses guanosine(46) in tRNA + S-adenosyl-L-methionine = N(7)-methylguanosine(46) in tRNA + S-adenosyl-L-homocysteine. The protein operates within tRNA modification; N(7)-methylguanine-tRNA biosynthesis. In terms of biological role, catalyzes the formation of N(7)-methylguanine at position 46 (m7G46) in tRNA. The protein is tRNA (guanine-N(7)-)-methyltransferase of Acetivibrio thermocellus (strain ATCC 27405 / DSM 1237 / JCM 9322 / NBRC 103400 / NCIMB 10682 / NRRL B-4536 / VPI 7372) (Clostridium thermocellum).